The sequence spans 388 residues: Small ribosomal subunit protein uS3m (388 aa).

The protein belongs to the universal ribosomal protein uS3 family.

The protein resides in the mitochondrion. Essential for mitochondrial protein synthesis and required for the maturation of small ribosomal subunits. The sequence is that of Small ribosomal subunit protein uS3m (VAR1) from Kluyveromyces lactis (strain ATCC 8585 / CBS 2359 / DSM 70799 / NBRC 1267 / NRRL Y-1140 / WM37) (Yeast).